The sequence spans 458 residues: Divalent metal cation transporter MntH (458 aa).

Helical transmembrane passes span 38–58 (GFWKTLAAYTGPGILVAVGYM), 76–96 (SLLSVILISSLIAMLLQAMAA), 119–139 (GGFLWVITELAIMATDIAEII), 151–171 (MPLIVGIIITTADVLILLLLM), 180–200 (AVVATLVLVILLVFAYEVILA), 223–243 (MLYLSLGIVGATVMPHDLFLG), 275–295 (LTMAFIVNSLLLILGAALFFG), 315–335 (IVGAIASPMLSMLFAVALLAS), 370–390 (LMSVTPVLIFAIYYHGNEAKI), 393–413 (LLTFSQVFLSIALPFAVIPLV), and 437–457 (FISGVLIILNLYLIAQTLGFV).

Belongs to the NRAMP family.

Its subcellular location is the cell membrane. In terms of biological role, h(+)-stimulated, divalent metal cation uptake system. This is Divalent metal cation transporter MntH from Lacticaseibacillus casei (strain BL23) (Lactobacillus casei).